The primary structure comprises 71 residues: Long neurotoxin 1 (71 aa).

Disulfide bonds link Cys3/Cys21, Cys14/Cys42, Cys27/Cys31, Cys46/Cys57, and Cys58/Cys63.

It belongs to the three-finger toxin family. Long-chain subfamily. Type II alpha-neurotoxin sub-subfamily. As to expression, expressed by the venom gland.

It is found in the secreted. Functionally, binds with high affinity to muscular (alpha-1/CHRNA1) and neuronal (alpha-7/CHRNA7) nicotinic acetylcholine receptor (nAChR) and inhibits acetylcholine from binding to the receptor, thereby impairing neuromuscular and neuronal transmission. In Naja melanoleuca (Forest cobra), this protein is Long neurotoxin 1.